The chain runs to 148 residues: uncharacterized protein (148 aa).

The signal sequence occupies residues 1–19 (MLSNAKLLLSLAMASTALG). N-linked (GlcNAc...) asparagine glycosylation is found at N41 and N59. A lipid anchor (GPI-anchor amidated asparagine) is attached at N127. Residues 128–148 (AANARAIPGALGLAGAVMMLL) constitute a propeptide, removed in mature form.

The protein belongs to the SED1 family. In terms of processing, the GPI-anchor is attached to the protein in the endoplasmic reticulum and serves to target the protein to the cell surface. There, the glucosamine-inositol phospholipid moiety is cleaved off and the GPI-modified mannoprotein is covalently attached via its lipidless GPI glycan remnant to the 1,6-beta-glucan of the outer cell wall layer.

The protein resides in the secreted. It localises to the cell wall. The protein localises to the membrane. Functionally, cell wall protein that plays a role in adaptation and resistance to cell wall stress. This is an uncharacterized protein from Saccharomyces cerevisiae (strain ATCC 204508 / S288c) (Baker's yeast).